The sequence spans 291 residues: Formamidopyrimidine-DNA glycosylase (291 aa).

Residue P2 is the Schiff-base intermediate with DNA of the active site. E3 acts as the Proton donor in catalysis. The Proton donor; for beta-elimination activity role is filled by K60. Residues H97, R116, and R161 each coordinate DNA. Residues 246-280 form an FPG-type zinc finger; it reads WVYNRAGEPCRVCGMPIQRIRLAGRSSHFCSECQT. R270 acts as the Proton donor; for delta-elimination activity in catalysis.

It belongs to the FPG family. As to quaternary structure, monomer. The cofactor is Zn(2+).

The catalysed reaction is Hydrolysis of DNA containing ring-opened 7-methylguanine residues, releasing 2,6-diamino-4-hydroxy-5-(N-methyl)formamidopyrimidine.. The enzyme catalyses 2'-deoxyribonucleotide-(2'-deoxyribose 5'-phosphate)-2'-deoxyribonucleotide-DNA = a 3'-end 2'-deoxyribonucleotide-(2,3-dehydro-2,3-deoxyribose 5'-phosphate)-DNA + a 5'-end 5'-phospho-2'-deoxyribonucleoside-DNA + H(+). Involved in base excision repair of DNA damaged by oxidation or by mutagenic agents. Acts as a DNA glycosylase that recognizes and removes damaged bases. Has a preference for oxidized purines, such as 7,8-dihydro-8-oxoguanine (8-oxoG). Has AP (apurinic/apyrimidinic) lyase activity and introduces nicks in the DNA strand. Cleaves the DNA backbone by beta-delta elimination to generate a single-strand break at the site of the removed base with both 3'- and 5'-phosphates. The protein is Formamidopyrimidine-DNA glycosylase of Nostoc punctiforme (strain ATCC 29133 / PCC 73102).